The following is a 459-amino-acid chain: Neuronal acetylcholine receptor subunit beta-2 (459 aa).

The Extracellular segment spans residues 1–203 (LRSDFLLGPE…ITYDFVIKRK (203 aa)). N-linked (GlcNAc...) asparagine glycosylation is found at Asn21 and Asn138. A disulfide bridge links Cys125 with Cys139. Residues 204 to 228 (PLFYTINLIIPCVLITSLAILVFYL) traverse the membrane as a helical segment. Residues 229-235 (PSDCGEK) are Cytoplasmic-facing. A helical transmembrane segment spans residues 236–254 (VTLCMSVLLALTVFLLLIS). At 255–269 (KIVPPTSLAVPLIGK) the chain is on the extracellular side. A helical transmembrane segment spans residues 270-291 (YLMFTMVLVTFSIVTSVCVLNV). Residues 292 to 421 (HHRSPSTHYM…WKYVAMVIDR (130 aa)) lie on the Cytoplasmic side of the membrane. Residues 422 to 440 (LFLWIFILVCVVGTLGLFV) form a helical membrane-spanning segment.

This sequence belongs to the ligand-gated ion channel (TC 1.A.9) family. Acetylcholine receptor (TC 1.A.9.1) subfamily. Beta-2/CHRNB2 sub-subfamily. Neuronal AChR is a heteropentamer composed of two different types of subunits: alpha and beta. CHRNB2/Beta-2 subunit can be combined to CHRNA2/alpha-2, CHRNA3/alpha-3 or CHRNA4/alpha-4, CHRNA5/alpha-5, CHRNA6/alpha-6 and CHRNB3/beta-3 to give rise to functional receptors.

It localises to the synaptic cell membrane. The protein localises to the cell membrane. The catalysed reaction is Ca(2+)(in) = Ca(2+)(out). It catalyses the reaction K(+)(in) = K(+)(out). The enzyme catalyses Na(+)(in) = Na(+)(out). Its activity is regulated as follows. Activated by a myriad of ligands such as acetylcholine, cytisine, nicotine, choline and epibatidine. nAChR activity is inhibited by the antagonist alpha-conotoxins BuIA, PnIA, PnIC, GID and MII, small disulfide-constrained peptides from cone snails. Functionally, component of neuronal acetylcholine receptors (nAChRs) that function as pentameric, ligand-gated cation channels with high calcium permeability among other activities. nAChRs are excitatory neurotrasnmitter receptors formed by a collection of nAChR subunits known to mediate synaptic transmission in the nervous system and the neuromuscular junction. Each nAchR subunit confers differential attributes to channel properties, including activation, deactivation and desensitization kinetics, pH sensitivity, cation permeability, and binding to allosteric modulators. CHRNB2 forms heteropentameric neuronal acetylcholine receptors with CHRNA2, CHRNA3, CHRNA4 and CHRNA6, as well as CHRNA5 and CHRNB3 as accesory subunits. This Carassius auratus (Goldfish) protein is Neuronal acetylcholine receptor subunit beta-2 (chrnb2).